Here is a 528-residue protein sequence, read N- to C-terminus: GMP synthase [glutamine-hydrolyzing] (528 aa).

The Glutamine amidotransferase type-1 domain occupies serine 13–aspartate 204. Cysteine 90 acts as the Nucleophile in catalysis. Residues histidine 178 and glutamate 180 contribute to the active site. The 199-residue stretch at tryptophan 205 to arginine 403 folds into the GMPS ATP-PPase domain. An ATP-binding site is contributed by serine 232–serine 238.

As to quaternary structure, homodimer.

The catalysed reaction is XMP + L-glutamine + ATP + H2O = GMP + L-glutamate + AMP + diphosphate + 2 H(+). The protein operates within purine metabolism; GMP biosynthesis; GMP from XMP (L-Gln route): step 1/1. Its function is as follows. Catalyzes the synthesis of GMP from XMP. The sequence is that of GMP synthase [glutamine-hydrolyzing] from Prochlorococcus marinus (strain AS9601).